The following is a 633-amino-acid chain: Phosphomethylpyrimidine synthase (633 aa).

The span at 1 to 13 shows a compositional bias: polar residues; it reads MNIRSNPDTTLPA. The disordered stretch occupies residues 1-22; it reads MNIRSNPDTTLPAVTTGPLPSS. Residues N221, M250, Y279, H315, 335 to 337, 376 to 379, and E415 each bind substrate; these read SRG and DGLR. A Zn(2+)-binding site is contributed by H419. Y442 lines the substrate pocket. H483 serves as a coordination point for Zn(2+). [4Fe-4S] cluster-binding residues include C563, C566, and C571.

It belongs to the ThiC family. In terms of assembly, homodimer. The cofactor is [4Fe-4S] cluster.

It catalyses the reaction 5-amino-1-(5-phospho-beta-D-ribosyl)imidazole + S-adenosyl-L-methionine = 4-amino-2-methyl-5-(phosphooxymethyl)pyrimidine + CO + 5'-deoxyadenosine + formate + L-methionine + 3 H(+). Its pathway is cofactor biosynthesis; thiamine diphosphate biosynthesis. Functionally, catalyzes the synthesis of the hydroxymethylpyrimidine phosphate (HMP-P) moiety of thiamine from aminoimidazole ribotide (AIR) in a radical S-adenosyl-L-methionine (SAM)-dependent reaction. The protein is Phosphomethylpyrimidine synthase of Bradyrhizobium sp. (strain BTAi1 / ATCC BAA-1182).